Here is a 473-residue protein sequence, read N- to C-terminus: Cysteine--tRNA ligase (473 aa).

Residue Cys-33 coordinates Zn(2+). A 'HIGH' region motif is present at residues Ala-35 to His-45. 3 residues coordinate Zn(2+): Cys-211, His-236, and Glu-240. A 'KMSKS' region motif is present at residues Lys-267–Ser-271. Position 270 (Lys-270) interacts with ATP.

The protein belongs to the class-I aminoacyl-tRNA synthetase family. In terms of assembly, monomer. It depends on Zn(2+) as a cofactor.

It is found in the cytoplasm. It carries out the reaction tRNA(Cys) + L-cysteine + ATP = L-cysteinyl-tRNA(Cys) + AMP + diphosphate. The protein is Cysteine--tRNA ligase of Mycobacterium leprae (strain Br4923).